The sequence spans 262 residues: Apolipoprotein A-I-1 (262 aa).

The signal sequence occupies residues 1–18 (MKFLALALTILLAAGTQA). Residues 32–63 (VKAALSMYIAQVKLTAQRSIDLLDDTEYKEYK) form a 3 X approximate tandem repeats region. Tandem repeats lie at residues 64 to 85 (MQLT…QSLA) and 87 to 107 (YSEA…AEVM). A 10 X approximate tandem repeats region spans residues 64-262 (MQLTQSLDNL…YETISQAMKA (199 aa)). The stretch at 108-118 (KDVEELRSQLE) is one 3; half-length repeat. Tandem repeats lie at residues 119–140 (PKRA…KKLE), 141–162 (PLIK…AKME), 163–184 (PIVE…TKLM), 185–206 (PIVE…TLAA), and 207–228 (PYAE…EKVS). One copy of the 9; half-length repeat lies at 229 to 239 (PLSEDFKGQVG). Repeat unit 10 spans residues 240 to 262 (PAAEQAKQKLLAFYETISQAMKA).

The protein belongs to the apolipoprotein A1/A4/E family.

Its subcellular location is the secreted. Functionally, participates in the reverse transport of cholesterol from tissues to the liver for excretion by promoting cholesterol efflux from tissues and by acting as a cofactor for the lecithin cholesterol acyltransferase (LCAT). The protein is Apolipoprotein A-I-1 of Oncorhynchus mykiss (Rainbow trout).